Consider the following 61-residue polypeptide: Large ribosomal subunit protein bL32 (61 aa).

It belongs to the bacterial ribosomal protein bL32 family.

This chain is Large ribosomal subunit protein bL32, found in Hyphomonas neptunium (strain ATCC 15444).